The sequence spans 489 residues: Cytochrome P450 302a1, mitochondrial (489 aa).

Residue C434 coordinates heme.

It belongs to the cytochrome P450 family. The cofactor is heme. As to expression, complex coexpression pattern of dib (disembodied) and sad (shade) in the early embryo that restricts to the prothoracic gland cells of the developing ring gland during late embryogenesis. In larvae and adult, coexpression is seen in prothoracic gland and follicle cells of the ovary. In adults, coexpression is seen in the follicle cells.

The protein resides in the mitochondrion membrane. The catalysed reaction is 2,22-dideoxyecdysone + 2 reduced [adrenodoxin] + O2 + 2 H(+) = 2-deoxyecdysone + 2 oxidized [adrenodoxin] + H2O. The protein operates within steroid biosynthesis; ecdysteroid biosynthesis. Its function is as follows. Required for CNS development; negatively regulates glial cell division in the embryonic midline. Involved in the metabolism of insect hormones; responsible for ecdysteroid C22-hydroxylase activity. May be involved in the breakdown of synthetic insecticides. The sequence is that of Cytochrome P450 302a1, mitochondrial from Drosophila melanogaster (Fruit fly).